The chain runs to 333 residues: Olfactory receptor 9S13 (333 aa).

Residues 1–35 are Extracellular-facing; that stretch reads MATAVHRNGSLTPVSLRVFVLVGFGGGALTQALLF. The N-linked (GlcNAc...) asparagine glycan is linked to Asn-8. The helical transmembrane segment at 36 to 56 threads the bilayer; that stretch reads AVFLVLYVVTVLGNLTMIVVI. Over 57 to 72 the chain is Cytoplasmic; that stretch reads TLDARLHSPMYFFLKN. Residues 73 to 93 form a helical membrane-spanning segment; the sequence is LSFVDLCYSSAIAPNALANFL. Residues 94 to 106 lie on the Extracellular side of the membrane; the sequence is STSKVISFEACAT. Cys-104 and Cys-196 form a disulfide bridge. Residues 107–127 form a helical membrane-spanning segment; the sequence is QFFFFSLLATTETFLLAVMAY. Over 128 to 150 the chain is Cytoplasmic; it reads DRFMAICSPLRYPVTMCPTTCTR. The chain crosses the membrane as a helical span at residues 151 to 171; sequence LVLGTFCVGCLNSIVQTSLTF. Residues 172-203 are Extracellular-facing; that stretch reads QLPFCSSNRIDHFYCDVPPLLQLACASTALNE. The helical transmembrane segment at 204-224 threads the bilayer; that stretch reads LFLFGLCGFIIVSTTLAVLVS. Over 225–251 the chain is Cytoplasmic; the sequence is YGYITVTILRMHSGSGRHKVFSTCGSH. Residues 252–272 form a helical membrane-spanning segment; the sequence is LTAVSLFYGTLFVMYAQPGAL. Residues 273-278 lie on the Extracellular side of the membrane; the sequence is TSMEQG. Residues 279–299 form a helical membrane-spanning segment; the sequence is KVVSIFYTLVIPMLNPLIYSL. At 300–333 the chain is on the cytoplasmic side; the sequence is RNKDVKDALQRLGQRHSLVKAVRGCPAAGGNASV.

It belongs to the G-protein coupled receptor 1 family.

The protein resides in the cell membrane. In terms of biological role, odorant receptor. The protein is Olfactory receptor 9S13 of Mus musculus (Mouse).